Here is a 173-residue protein sequence, read N- to C-terminus: Photosystem I assembly protein Ycf3 (173 aa).

3 TPR repeats span residues 35 to 68, 72 to 105, and 120 to 153; these read AFVY…EEDT, GYIL…NPRL, and GEKA…APNN.

The protein belongs to the Ycf3 family.

The protein localises to the cellular thylakoid membrane. Essential for the assembly of the photosystem I (PSI) complex. May act as a chaperone-like factor to guide the assembly of the PSI subunits. In Trichormus variabilis (strain ATCC 29413 / PCC 7937) (Anabaena variabilis), this protein is Photosystem I assembly protein Ycf3.